The chain runs to 91 residues: Small ribosomal subunit protein bS6 (91 aa).

This sequence belongs to the bacterial ribosomal protein bS6 family.

In terms of biological role, binds together with bS18 to 16S ribosomal RNA. This Leptospira borgpetersenii serovar Hardjo-bovis (strain JB197) protein is Small ribosomal subunit protein bS6.